Here is a 243-residue protein sequence, read N- to C-terminus: Orotidine 5'-phosphate decarboxylase (243 aa).

Substrate-binding positions include D18, K39, 66-75 (DLKFHDIPAT), T130, R192, Q201, G221, and R222. Catalysis depends on K68, which acts as the Proton donor.

It belongs to the OMP decarboxylase family. Type 1 subfamily. In terms of assembly, homodimer.

It catalyses the reaction orotidine 5'-phosphate + H(+) = UMP + CO2. It participates in pyrimidine metabolism; UMP biosynthesis via de novo pathway; UMP from orotate: step 2/2. Functionally, catalyzes the decarboxylation of orotidine 5'-monophosphate (OMP) to uridine 5'-monophosphate (UMP). This Synechococcus sp. (strain WH7803) protein is Orotidine 5'-phosphate decarboxylase.